We begin with the raw amino-acid sequence, 96 residues long: Small ribosomal subunit protein bS6 (96 aa).

It belongs to the bacterial ribosomal protein bS6 family.

Binds together with bS18 to 16S ribosomal RNA. The protein is Small ribosomal subunit protein bS6 of Cutibacterium acnes (strain DSM 16379 / KPA171202) (Propionibacterium acnes).